The following is a 131-amino-acid chain: Protein E11 homolog (131 aa).

The protein belongs to the chordopoxvirinae E11 family.

The protein resides in the virion. This is Protein E11 homolog from Fowlpox virus (strain NVSL) (FPV).